The following is a 183-amino-acid chain: MDIDPYKEFGASVELLSFLPSDFFPSVRDLLDTASALYREALESPEHCSPHHTALRQAILCWGELMNLATWVGSNLEDPASRELVVSYVNVNMGLKIRQLLWFHISCLTFGRETVLEYLVSFGVWIRTPPAYRPPNAPILSTLPETTVVRRRGRSPRRRTPSPRRRRSQSPRRRRSQSRESQC.

Residues 136–183 (NAPILSTLPETTVVRRRGRSPRRRTPSPRRRRSQSPRRRRSQSRESQC) are disordered. Residues 149 to 176 (VRRRGRSPRRRTPSPRRRRSQSPRRRRS) show a composition bias toward basic residues. 3 positions are modified to phosphoserine; by host: Ser-155, Ser-162, and Ser-170. The stretch at 155-161 (SPRRRTP) is one 1; half-length repeat. Residues 155-177 (SPRRRTPSPRRRRSQSPRRRRSQ) form a 3 X 8 AA repeats of S-P-R-R-R-[PR]-S-Q region. The Bipartite nuclear localization signal motif lies at 158–175 (RRTPSPRRRRSQSPRRRR). 2 consecutive repeat copies span residues 162 to 169 (SPRRRRSQ) and 170 to 177 (SPRRRRSQ). The segment at 177–183 (QSRESQC) is RNA binding.

It belongs to the orthohepadnavirus core antigen family. In terms of assembly, homodimerizes, then multimerizes. Interacts with cytosol exposed regions of viral L glycoprotein present in the reticulum-to-Golgi compartment. Interacts with human FLNB. Phosphorylated form interacts with host importin alpha; this interaction depends on the exposure of the NLS, which itself depends upon genome maturation and/or phosphorylation of the capsid protein. Interacts with host NUP153. In terms of processing, phosphorylated by host SRPK1, SRPK2, and maybe protein kinase C or GAPDH. Phosphorylation is critical for pregenomic RNA packaging. Protein kinase C phosphorylation is stimulated by HBx protein and may play a role in transport of the viral genome to the nucleus at the late step during the viral replication cycle.

The protein resides in the virion. Its subcellular location is the host cytoplasm. Self assembles to form an icosahedral capsid. Most capsids appear to be large particles with an icosahedral symmetry of T=4 and consist of 240 copies of capsid protein, though a fraction forms smaller T=3 particles consisting of 180 capsid proteins. Entering capsids are transported along microtubules to the nucleus. Phosphorylation of the capsid is thought to induce exposure of nuclear localization signal in the C-terminal portion of the capsid protein that allows binding to the nuclear pore complex via the importin (karyopherin-) alpha and beta. Capsids are imported in intact form through the nuclear pore into the nuclear basket, where it probably binds NUP153. Only capsids that contain the mature viral genome can release the viral DNA and capsid protein into the nucleoplasm. Immature capsids get stuck in the basket. Capsids encapsulate the pre-genomic RNA and the P protein. Pre-genomic RNA is reverse-transcribed into DNA while the capsid is still in the cytoplasm. The capsid can then either be directed to the nucleus, providing more genomes for transcription, or bud through the endoplasmic reticulum to provide new virions. The protein is Capsid protein of Hepatitis B virus genotype B/C subtype adw (isolate Okinawa/pODW282/1998) (HBV-B).